Consider the following 221-residue polypeptide: Ribosomal RNA small subunit methyltransferase G (221 aa).

S-adenosyl-L-methionine contacts are provided by residues Gly-90, Leu-95, 141–142 (VE), and Arg-154.

It belongs to the methyltransferase superfamily. RNA methyltransferase RsmG family.

The protein resides in the cytoplasm. It catalyses the reaction guanosine(527) in 16S rRNA + S-adenosyl-L-methionine = N(7)-methylguanosine(527) in 16S rRNA + S-adenosyl-L-homocysteine. In terms of biological role, specifically methylates the N7 position of guanine in position 527 of 16S rRNA. The protein is Ribosomal RNA small subunit methyltransferase G of Polaromonas naphthalenivorans (strain CJ2).